A 533-amino-acid polypeptide reads, in one-letter code: Beta-1,2-xylosyltransferase RCN11 (533 aa).

Over 1 to 23 the chain is Cytoplasmic; the sequence is MMPVRTYHHHHHHNNSNNHRLRR. The helical; Signal-anchor for type II membrane protein transmembrane segment at 24 to 44 threads the bilayer; the sequence is IIPRVLLAVFAIYAVSFAAYL. Topologically, residues 45–533 are lumenal; the sequence is LRHQSPHPHP…LSNILKGFGC (489 aa). Residues 51–78 form a disordered region; sequence HPHPHPAADPERDAVDAAGGGGGGGAVD. Basic and acidic residues predominate over residues 56 to 65; the sequence is PAADPERDAV. N-linked (GlcNAc...) asparagine glycans are attached at residues asparagine 307 and asparagine 313.

This sequence belongs to the glycosyltransferase 61 family. Expressed at the base of the crown roots and in the basal region of the shoot, which contains the shoot and axillary meristems.

The protein localises to the golgi apparatus membrane. Its pathway is glycan metabolism. Functionally, glycosyltransferase involved in the xylosylation of N-glycans. Possesses beta-1,2-xylosyltransferase activity, transferring xylose from UDP-xylose to the core beta-linked mannose of N-glycans. Beta-1,2-linked xylose residues on N-glycans are critical for seed germination and plant development and growth under conditions of abiotic stress. This Oryza sativa subsp. japonica (Rice) protein is Beta-1,2-xylosyltransferase RCN11.